An 804-amino-acid chain; its full sequence is Protein translocase subunit SecA (804 aa).

ATP-binding positions include Gln-87, 105-109 (GEGKT), and Asp-500.

The protein belongs to the SecA family. Monomer and homodimer. Part of the essential Sec protein translocation apparatus which comprises SecA, SecYEG and auxiliary proteins SecDF-YajC and YidC.

It localises to the cell inner membrane. It is found in the cytoplasm. It carries out the reaction ATP + H2O + cellular proteinSide 1 = ADP + phosphate + cellular proteinSide 2.. Part of the Sec protein translocase complex. Interacts with the SecYEG preprotein conducting channel. Has a central role in coupling the hydrolysis of ATP to the transfer of proteins into and across the cell membrane, serving both as a receptor for the preprotein-SecB complex and as an ATP-driven molecular motor driving the stepwise translocation of polypeptide chains across the membrane. This Neorickettsia sennetsu (strain ATCC VR-367 / Miyayama) (Ehrlichia sennetsu) protein is Protein translocase subunit SecA.